Here is a 304-residue protein sequence, read N- to C-terminus: Small glutamine-rich tetratricopeptide repeat-containing protein beta (304 aa).

4 TPR repeats span residues 15–49 (LREQ…SPED), 85–118 (ADQL…DPNN), 120–152 (VYYC…DSKY), and 153–186 (SKAY…DPEN). At lysine 131 the chain carries N6-acetyllysine. Phosphoserine occurs at positions 293, 295, and 297.

It belongs to the SGT family. As to quaternary structure, homooligomerize. Expressed specifically in brain.

Its function is as follows. Co-chaperone that binds directly to HSC70 and HSP70 and regulates their ATPase activity. The sequence is that of Small glutamine-rich tetratricopeptide repeat-containing protein beta (Sgtb) from Rattus norvegicus (Rat).